A 51-amino-acid polypeptide reads, in one-letter code: Large ribosomal subunit protein eL39 (51 aa).

Residues 1–19 show a composition bias toward basic residues; sequence MSHNMKGQKKRLAKAHKQN. The segment at 1–23 is disordered; sequence MSHNMKGQKKRLAKAHKQNSRVP.

This sequence belongs to the eukaryotic ribosomal protein eL39 family.

The protein is Large ribosomal subunit protein eL39 of Methanosarcina mazei (strain ATCC BAA-159 / DSM 3647 / Goe1 / Go1 / JCM 11833 / OCM 88) (Methanosarcina frisia).